Consider the following 213-residue polypeptide: MDGKFISFEGPDGAGKTSVIQQIQLELEDQLGTEKVMYTREPGGNKISEQIRQVLFDGQNTDMDGRTEALLFAAARRQHIVSEIIPGLKAGKVILCDRFVDSSIAYQGAGRGLGEKEIWQINQFAIDGLMPALTIYLDIESEIGLKRIAEHRSNQVNRLDEEKLEFHRTVRQSYLKLYQNYPERIELIDASQPLEKVIEDVKATIHDRFSDLF.

10-17 (GPDGAGKT) provides a ligand contact to ATP.

The protein belongs to the thymidylate kinase family.

The enzyme catalyses dTMP + ATP = dTDP + ADP. In terms of biological role, phosphorylation of dTMP to form dTDP in both de novo and salvage pathways of dTTP synthesis. This is Thymidylate kinase from Limosilactobacillus reuteri (strain DSM 20016) (Lactobacillus reuteri).